The following is a 567-amino-acid chain: Septation ring formation regulator EzrA (567 aa).

The Extracellular segment spans residues 1–2 (ME). A helical membrane pass occupies residues 3–21 (FIIGLIVILLALFSVGYFL). Residues 22-567 (RKNIYKEIDR…AQQEKEYQHQ (546 aa)) are Cytoplasmic-facing. Coiled-coil stretches lie at residues 108–185 (IEDL…YEEE), 243–375 (KGYK…RDHV), and 402–529 (KGHL…ERRF).

It belongs to the EzrA family.

It localises to the cell membrane. Its function is as follows. Negative regulator of FtsZ ring formation; modulates the frequency and position of FtsZ ring formation. Inhibits FtsZ ring formation at polar sites. Interacts either with FtsZ or with one of its binding partners to promote depolymerization. The chain is Septation ring formation regulator EzrA from Bacillus pumilus (strain SAFR-032).